The following is a 780-amino-acid chain: Gelsolin (780 aa).

The signal sequence occupies residues 1 to 25; sequence MAPYCSSLRSALLVLALCALSPSHA. Residues 28–48 are disordered; sequence ASRGRAQERAPQSRVSETRPS. Residues 51-174 are actin-severing; it reads VVEHPEFLKA…YKKGGVASGF (124 aa). Residues 74–155 form a Gelsolin-like 1 repeat; the sequence is FDLVPVPPNL…EVQGFESSTF (82 aa). Phosphotyrosine is present on Tyr84. Positions 90, 91, 122, 134, 139, and 141 each coordinate Ca(2+). The actin-actin interfilament contact point stretch occupies residues 121 to 124; the sequence is DESG. Position 160–167 (160–167) interacts with a 1,2-diacyl-sn-glycero-3-phospho-(1D-myo-inositol-4,5-bisphosphate); the sequence is KSGLKYKK. Residue Val170 coordinates Ca(2+). Position 186 to 194 (186 to 194) interacts with a 1,2-diacyl-sn-glycero-3-phospho-(1D-myo-inositol-4,5-bisphosphate); it reads RLFQVKGRR. The stretch at 196 to 268 is one Gelsolin-like 2 repeat; it reads VRATEVPVSW…SEEGSEPEAM (73 aa). Ca(2+) contacts are provided by Gly211 and Asp212. The cysteines at positions 213 and 226 are disulfide-linked. The Ca(2+) site is built by Glu234, Asp284, Glu327, Asp328, and Glu352. The interval 244 to 286 is disordered; the sequence is GIRDNERSGRAQVHVSEEGSEPEAMLQVLGPKPDLPQGTEDTA. The Gelsolin-like 3 repeat unit spans residues 315–387; the sequence is DENPFAQSAL…LPEGGETPLF (73 aa). Phosphotyrosine is present on residues Tyr407 and Tyr463. An actin-binding, Ca-sensitive region spans residues 432–780; sequence AAQHGMDDDG…LDRALAELAA (349 aa). Residues 453-534 form a Gelsolin-like 4 repeat; that stretch reads SNKVLVDPAT…VQGKEPAHLM (82 aa). Ca(2+)-binding residues include Gly469, Asp470, Glu500, Asp512, Gly517, Pro519, and Thr549. A Gelsolin-like 5 repeat occupies 576 to 640; that stretch reads AVEVMPKAGA…EEGSEPDGFW (65 aa). N6-acetyllysine is present on Lys582. Ca(2+) contacts are provided by Asn589 and Asp590. A Phosphotyrosine modification is found at Tyr601. Glu612 is a Ca(2+) binding site. Phosphotyrosine is present on Tyr649. A Gelsolin-like 6 repeat occupies 679 to 754; that stretch reads IEEVPGELMQ…VRQGFEPPSF (76 aa). Ca(2+) contacts are provided by Asp694, Asp695, and Glu717. The residue at position 740 (Thr740) is a Phosphothreonine.

The protein belongs to the villin/gelsolin family. In terms of assembly, binds to actin and to fibronectin. Identified in a complex composed of ACTA1, COBL, GSN and TMSB4X. Interacts with the inactive form of EIF2AK2/PKR. Interacts with FLII. Post-translationally, phosphorylated on tyrosine residues in vitro.

It localises to the secreted. It is found in the cytoplasm. The protein resides in the cytoskeleton. Its function is as follows. Calcium-regulated, actin-modulating protein that binds to the plus (or barbed) ends of actin monomers or filaments, preventing monomer exchange (end-blocking or capping). It can promote the assembly of monomers into filaments (nucleation) as well as sever filaments already formed. Plays a role in ciliogenesis. This Rattus norvegicus (Rat) protein is Gelsolin (Gsn).